A 78-amino-acid polypeptide reads, in one-letter code: Large ribosomal subunit protein bL28 (78 aa).

This sequence belongs to the bacterial ribosomal protein bL28 family.

The protein is Large ribosomal subunit protein bL28 (rpmB) of Treponema pallidum (strain Nichols).